The following is a 204-amino-acid chain: Glycerol-3-phosphate acyltransferase (204 aa).

The next 5 helical transmembrane spans lie at 8–28, 53–73, 81–101, 116–136, and 155–175; these read MLVF…CYIF, VPAI…VVLA, FITA…IFFG, FGFS…VAVI, and VIFT…IIIL.

It belongs to the PlsY family. Probably interacts with PlsX.

Its subcellular location is the cell inner membrane. It carries out the reaction an acyl phosphate + sn-glycerol 3-phosphate = a 1-acyl-sn-glycero-3-phosphate + phosphate. Its pathway is lipid metabolism; phospholipid metabolism. Its function is as follows. Catalyzes the transfer of an acyl group from acyl-phosphate (acyl-PO(4)) to glycerol-3-phosphate (G3P) to form lysophosphatidic acid (LPA). This enzyme utilizes acyl-phosphate as fatty acyl donor, but not acyl-CoA or acyl-ACP. The polypeptide is Glycerol-3-phosphate acyltransferase (Francisella philomiragia subsp. philomiragia (strain ATCC 25017 / CCUG 19701 / FSC 153 / O#319-036)).